Here is a 1256-residue protein sequence, read N- to C-terminus: Splicing factor, arginine/serine-rich 19 (1256 aa).

6 disordered regions span residues Met1–Ala33, Gly158–Arg343, Ala371–Glu395, Pro408–Pro1030, Gly1112–Leu1152, and Phe1221–Leu1256. Residues Ser7–Pro27 are compositionally biased toward basic and acidic residues. The segment covering Ser192–Ser206 has biased composition (low complexity). A compositionally biased stretch (pro residues) spans Pro207–Pro222. Basic and acidic residues predominate over residues Asp227–Asp236. Phosphoserine is present on Ser240. Residues Thr255–Thr265 show a composition bias toward polar residues. A compositionally biased stretch (acidic residues) spans Pro268–Gly282. Phosphothreonine is present on Thr328. Residues Pro382–Glu393 are compositionally biased toward acidic residues. Positions Pro412–Pro424 are enriched in low complexity. A phosphoserine mark is found at Ser442 and Ser447. Residues Lys478–Gln489 are compositionally biased toward basic residues. Residues Ser491, Ser493, Ser510, Ser518, and Ser520 each carry the phosphoserine modification. 2 stretches are compositionally biased toward basic residues: residues Thr538–Ser553 and Arg560–Ser577. Phosphoserine is present on residues Ser577 and Ser579. Positions Arg592–Arg611 are enriched in basic residues. Positions Ser612–Lys623 are enriched in basic and acidic residues. Thr663 is subject to Phosphothreonine. 2 positions are modified to phosphoserine: Ser676 and Ser682. The residue at position 689 (Tyr689) is a Phosphotyrosine. Ser691 and Ser695 each carry phosphoserine. Basic and acidic residues-rich tracts occupy residues Ala696–Arg709 and Ser719–Ser741. Composition is skewed to low complexity over residues Pro752–Ser775 and Ser793–Ser804. A Glycyl lysine isopeptide (Lys-Gly) (interchain with G-Cter in SUMO2) cross-link involves residue Lys812. The segment covering Phe813–Pro831 has biased composition (basic and acidic residues). Residues Ser819 and Ser821 each carry the phosphoserine modification. The span at Lys843–Arg875 shows a compositional bias: basic residues. Ser876, Ser883, Ser910, and Ser912 each carry phosphoserine. The segment covering Ser922–Leu935 has biased composition (pro residues). Phosphothreonine is present on residues Thr923 and Thr936. Positions Asp938–Lys947 are enriched in polar residues. Residue Ser939 is modified to Phosphoserine. At Thr948 the chain carries Phosphothreonine. Residues Glu969–Gln984 are compositionally biased toward acidic residues. Positions Gln985 to Gly1017 are enriched in low complexity. The tract at residues Pro1131–Leu1256 is necessary for interaction with the CTD domain of POLR2A. The segment covering Ser1133 to Leu1152 has biased composition (basic and acidic residues). Residues Pro1244–Leu1256 are compositionally biased toward pro residues.

The protein belongs to the splicing factor SR family. In terms of assembly, interacts with POLR2A.

Its subcellular location is the nucleus. Functionally, may function in pre-mRNA splicing. The polypeptide is Splicing factor, arginine/serine-rich 19 (Scaf1) (Mus musculus (Mouse)).